Reading from the N-terminus, the 481-residue chain is Eukaryotic translation initiation factor 3 subunit L (481 aa).

Positions 1–22 are disordered; that stretch reads MSVDARTAYPGSRPPANMQDES. The PCI domain maps to 262–457; it reads DAIRTFSHIL…DLDYAIEGNL (196 aa).

Belongs to the eIF-3 subunit L family. Component of the eukaryotic translation initiation factor 3 (eIF-3) complex.

The protein localises to the cytoplasm. Functionally, component of the eukaryotic translation initiation factor 3 (eIF-3) complex, which is involved in protein synthesis of a specialized repertoire of mRNAs and, together with other initiation factors, stimulates binding of mRNA and methionyl-tRNAi to the 40S ribosome. The eIF-3 complex specifically targets and initiates translation of a subset of mRNAs involved in cell proliferation. This Coccidioides immitis (strain RS) (Valley fever fungus) protein is Eukaryotic translation initiation factor 3 subunit L.